A 481-amino-acid chain; its full sequence is uncharacterized protein (481 aa).

10 helical membrane passes run 32–52, 82–102, 137–157, 173–193, 204–224, 258–278, 289–309, 348–368, 392–412, and 418–438; these read LSWL…YWGV, FFHW…IMAY, MFLI…AATF, VQAF…WIGI, VGWG…TEFI, WTVF…MFVT, VIWG…GVME, LFLA…MDAV, LFWC…GASL, and TVVL…GGFI.

Belongs to the BCCT transporter (TC 2.A.15) family.

The protein resides in the cell inner membrane. Functionally, probable transporter whose substrate is unknown. Is not involved in aerobic D-malate transport. This is an uncharacterized protein from Escherichia coli (strain K12).